We begin with the raw amino-acid sequence, 478 residues long: Oxidative stress-induced growth inhibitor 1 (478 aa).

Ser-12 carries the post-translational modification Phosphoserine.

Belongs to the OKL38 family. NADPH is required as a cofactor.

Its subcellular location is the midbody. Monooxygenase catalytic activity. Involved in regulation of cytokinesis; promotes RHOA activity, probably acting locally at the midbody in late cytokinesis. Monooxygenase activity is involved in stabilizing transient structures between daughter cells, termed intercellular bridges, before abscission. Regulates differentiation and proliferation through the regulation of cell death. The sequence is that of Oxidative stress-induced growth inhibitor 1 from Mus musculus (Mouse).